Consider the following 903-residue polypeptide: Translation initiation factor IF-2 (903 aa).

Disordered regions lie at residues 57-171 and 267-318; these read EKFK…QRRR and PTPQ…EAVT. Positions 69–163 are enriched in basic and acidic residues; it reads KKEAKEPSEK…SEPQKPKESL (95 aa). The span at 267-278 shows a compositional bias: low complexity; it reads PTPQPMQKTKQP. Over residues 299–308 the composition is skewed to basic residues; it reads RRARKKHKKP. In terms of domain architecture, tr-type G spans 402-569; sequence PRAPVITIMG…IVLLQAEILE (168 aa). The segment at 411–418 is G1; the sequence is GHVDHGKT. A GTP-binding site is contributed by 411–418; it reads GHVDHGKT. Residues 436–440 are G2; it reads GITQH. The G3 stretch occupies residues 457–460; that stretch reads DTPG. Residues 457 to 461 and 511 to 514 each bind GTP; these read DTPGH and NKMD. The interval 511–514 is G4; that stretch reads NKMD. Residues 547–549 form a G5 region; sequence SAK.

Belongs to the TRAFAC class translation factor GTPase superfamily. Classic translation factor GTPase family. IF-2 subfamily.

It is found in the cytoplasm. In terms of biological role, one of the essential components for the initiation of protein synthesis. Protects formylmethionyl-tRNA from spontaneous hydrolysis and promotes its binding to the 30S ribosomal subunits. Also involved in the hydrolysis of GTP during the formation of the 70S ribosomal complex. The polypeptide is Translation initiation factor IF-2 (Campylobacter curvus (strain 525.92)).